Here is an 816-residue protein sequence, read N- to C-terminus: Phenylalanine--tRNA ligase beta subunit (816 aa).

Residues 40-148 (FEELAALKTG…EGMAHGQRFI (109 aa)) enclose the tRNA-binding domain. In terms of domain architecture, B5 spans 401 to 479 (KAVEVQRFSI…RIYGYDNVPT (79 aa)). Mg(2+)-binding residues include D457, D463, E466, and E467. The FDX-ACB domain occupies 721 to 814 (PVYPAVKRDI…LTDRFGGSFR (94 aa)).

It belongs to the phenylalanyl-tRNA synthetase beta subunit family. Type 1 subfamily. In terms of assembly, tetramer of two alpha and two beta subunits. The cofactor is Mg(2+).

Its subcellular location is the cytoplasm. The enzyme catalyses tRNA(Phe) + L-phenylalanine + ATP = L-phenylalanyl-tRNA(Phe) + AMP + diphosphate + H(+). This is Phenylalanine--tRNA ligase beta subunit from Desulfotalea psychrophila (strain LSv54 / DSM 12343).